A 93-amino-acid chain; its full sequence is Integration host factor subunit beta (93 aa).

Belongs to the bacterial histone-like protein family. In terms of assembly, heterodimer of an alpha and a beta chain.

This protein is one of the two subunits of integration host factor, a specific DNA-binding protein that functions in genetic recombination as well as in transcriptional and translational control. This Actinobacillus pleuropneumoniae serotype 7 (strain AP76) protein is Integration host factor subunit beta.